Consider the following 202-residue polypeptide: NADH-quinone oxidoreductase subunit C (202 aa).

Belongs to the complex I 30 kDa subunit family. As to quaternary structure, NDH-1 is composed of 14 different subunits. Subunits NuoB, C, D, E, F, and G constitute the peripheral sector of the complex.

The protein resides in the cell inner membrane. It catalyses the reaction a quinone + NADH + 5 H(+)(in) = a quinol + NAD(+) + 4 H(+)(out). In terms of biological role, NDH-1 shuttles electrons from NADH, via FMN and iron-sulfur (Fe-S) centers, to quinones in the respiratory chain. The immediate electron acceptor for the enzyme in this species is believed to be ubiquinone. Couples the redox reaction to proton translocation (for every two electrons transferred, four hydrogen ions are translocated across the cytoplasmic membrane), and thus conserves the redox energy in a proton gradient. This chain is NADH-quinone oxidoreductase subunit C, found in Acidovorax sp. (strain JS42).